Reading from the N-terminus, the 248-residue chain is Thioesterase FSL2 (248 aa).

Active-site charge relay system residues include S125, D195, and H223.

Belongs to the LovG family.

It functions in the pathway secondary metabolite biosynthesis. Its function is as follows. Thioesterase; part of the gene cluster that mediates the biosynthesis of fusarielins F, G and H, decaketide compounds with 5 methylations and a decaline core that act as mycoestrogens as they stimulate growth of MCF-7 breast cancer cells. The initial compound in the pathway is produced by the reducing polyketide synthase FSL1. FSL1 lacks an active enoyl reductase (ER) domain and biosynthesis of fusarielins relies on the trans-acting enoyl reductase FSL5, before it is released through hydrolysis catalyzed by the thioesterase FSL2. Fusarielins F, G, and H have a C11=C12 cis double bond and is fully reduced between C10 and C11 and between C12 and C13. FSL3 can be involved in the formation of the C11=C12 cis double bond by moving a hypothetical C10=C11 or C12=C13 trans double bond to form prefusarielin. Prefusarielin is oxygenated at C15 and C16 by the cytochrome P450 monooxygenase FSL4, resulting in fusarielin F, which subsequently is epoxidized into fusarielin G by the same enzyme. The final step in the pathway is a reduction of the carboxylic acid moiety to yield fusarielin H via a still undetermined mechanism. The sequence is that of Thioesterase FSL2 from Gibberella zeae (strain ATCC MYA-4620 / CBS 123657 / FGSC 9075 / NRRL 31084 / PH-1) (Wheat head blight fungus).